The chain runs to 39 residues: Photosystem II reaction center protein J (39 aa).

Residues 9 to 29 (LWLVGLVGGLAVITMLGLFIY) traverse the membrane as a helical segment.

This sequence belongs to the PsbJ family. As to quaternary structure, PSII is composed of 1 copy each of membrane proteins PsbA, PsbB, PsbC, PsbD, PsbE, PsbF, PsbH, PsbI, PsbJ, PsbK, PsbL, PsbM, PsbT, PsbX, PsbY, PsbZ, Psb30/Ycf12, at least 3 peripheral proteins of the oxygen-evolving complex and a large number of cofactors. It forms dimeric complexes.

The protein localises to the plastid. It localises to the chloroplast thylakoid membrane. In terms of biological role, one of the components of the core complex of photosystem II (PSII). PSII is a light-driven water:plastoquinone oxidoreductase that uses light energy to abstract electrons from H(2)O, generating O(2) and a proton gradient subsequently used for ATP formation. It consists of a core antenna complex that captures photons, and an electron transfer chain that converts photonic excitation into a charge separation. This chain is Photosystem II reaction center protein J, found in Phaeodactylum tricornutum (strain CCAP 1055/1).